Consider the following 504-residue polypeptide: Chromosomal replication initiator protein DnaA (504 aa).

The interval 1 to 109 (MTADPDPPFV…PTDEPEDAPD (109 aa)) is domain I, interacts with DnaA modulators. Residues 98-162 (ATPTDEPEDA…PDTSSDDSNA (65 aa)) are disordered. The span at 109 to 125 (DSFADSPAPASVPAGPA) shows a compositional bias: low complexity. Residues 110 to 163 (SFADSPAPASVPAGPADADEIDDDRDARVNAQESWPKYFSRPEPDTSSDDSNAV) are domain II. Positions 164-380 (NLNRRYTFDT…GALIRVTAFA (217 aa)) are domain III, AAA+ region. The ATP site is built by Gly208, Gly210, Lys211, and Thr212. Residues 381–504 (SLNKTRIDRS…TTRIRQRAKR (124 aa)) form a domain IV, binds dsDNA region.

This sequence belongs to the DnaA family. In terms of assembly, oligomerizes as a right-handed, spiral filament on DNA at oriC.

The protein resides in the cytoplasm. In terms of biological role, plays an essential role in the initiation and regulation of chromosomal replication. ATP-DnaA binds to the origin of replication (oriC) to initiate formation of the DNA replication initiation complex once per cell cycle. Binds the DnaA box (a 9 base pair repeat at the origin) and separates the double-stranded (ds)DNA. Forms a right-handed helical filament on oriC DNA; dsDNA binds to the exterior of the filament while single-stranded (ss)DNA is stabiized in the filament's interior. The ATP-DnaA-oriC complex binds and stabilizes one strand of the AT-rich DNA unwinding element (DUE), permitting loading of DNA polymerase. After initiation quickly degrades to an ADP-DnaA complex that is not apt for DNA replication. Binds acidic phospholipids. Its function is as follows. The probable consensus sequence for the DnaA box of this bacterium is 5'-TT(G/C)TCCACA-3'. This chain is Chromosomal replication initiator protein DnaA, found in Mycolicibacterium smegmatis (strain ATCC 700084 / mc(2)155) (Mycobacterium smegmatis).